Reading from the N-terminus, the 115-residue chain is MSESNQATFQGNDPAAHAPDAAAYDKGKGKAVEDMDVSMDEEEEESEESDAEIMVEDEDDDGDSNLEPVSTENIISGGRRTRGKTIDYQEAANKIDADEMDDEEDDDEDFKPSDK.

Residues 1 to 11 (MSESNQATFQG) show a composition bias toward polar residues. The tract at residues 1-115 (MSESNQATFQ…DDEDFKPSDK (115 aa)) is disordered. The segment covering 13–22 (DPAAHAPDAA) has biased composition (low complexity). The segment covering 23–33 (AYDKGKGKAVE) has biased composition (basic and acidic residues). 2 stretches are compositionally biased toward acidic residues: residues 34–64 (DMDV…DGDS) and 98–109 (DEMDDEEDDDED).

This sequence belongs to the CHZ1 family. In terms of assembly, forms a heterotrimer with H2A.Z-H2B, stabilizing the association of the histone dimer. Also, with a lower affinity, forms a heterotrimer with H2A-H2B.

Its subcellular location is the nucleus. Functionally, forms a chaperone-bound H2A.Z-H2B complex that acts as a source for SWR1 complex-dependent H2A to H2A.Z histone replacement in chromatin. The sequence is that of Histone H2A.Z-specific chaperone chz1 (chz1) from Emericella nidulans (strain FGSC A4 / ATCC 38163 / CBS 112.46 / NRRL 194 / M139) (Aspergillus nidulans).